The following is a 204-amino-acid chain: Ribosomal RNA small subunit methyltransferase G (204 aa).

The S-adenosyl-L-methionine site is built by G73, F78, and R139.

The protein belongs to the methyltransferase superfamily. RNA methyltransferase RsmG family.

It localises to the cytoplasm. It catalyses the reaction guanosine(527) in 16S rRNA + S-adenosyl-L-methionine = N(7)-methylguanosine(527) in 16S rRNA + S-adenosyl-L-homocysteine. Specifically methylates the N7 position of guanine in position 527 of 16S rRNA. This chain is Ribosomal RNA small subunit methyltransferase G, found in Coxiella burnetii (strain RSA 331 / Henzerling II).